A 693-amino-acid polypeptide reads, in one-letter code: Golgin subfamily A member 6D (693 aa).

A coiled-coil region spans residues 14 to 611; that stretch reads LEESRQNKLA…KLLELQELVL (598 aa). Disordered regions lie at residues 20–70, 497–547, and 662–693; these read NKLA…GDSQ, LPGE…GTEQ, and VEPA…MQDT. Positions 537 to 547 are enriched in basic and acidic residues; the sequence is LPKEKADGTEQ. Over residues 674 to 693 the composition is skewed to polar residues; the sequence is PHNNPTVQQIVQLSPVMQDT.

Belongs to the GOLGA6 family.

The sequence is that of Golgin subfamily A member 6D (GOLGA6D) from Homo sapiens (Human).